A 266-amino-acid chain; its full sequence is Bidirectional sugar transporter SWEET7b (266 aa).

Residues 1–9 are Extracellular-facing; the sequence is MVSPDLIRN. A helical transmembrane segment spans residues 10–30; that stretch reads MVGIVGNIISFGLFLSPVPTF. The 88-residue stretch at 10 to 97 folds into the MtN3/slv 1 domain; it reads MVGIVGNIIS…TIFFLFSDKK (88 aa). Residues 31–45 are Cytoplasmic-facing; the sequence is YRIIKNKDVQDFKAD. The helical transmembrane segment at 46 to 66 threads the bilayer; that stretch reads PYLATLLNCMLWVFYGLPIVH. Residues 67-69 lie on the Extracellular side of the membrane; it reads PNS. The chain crosses the membrane as a helical span at residues 70 to 90; sequence ILVVTINGIGLIIEAVYLTIF. Over 91–101 the chain is Cytoplasmic; the sequence is FLFSDKKNKKK. The helical transmembrane segment at 102-122 threads the bilayer; it reads MGVVLATEALFMAAVVLGVLL. The Extracellular segment spans residues 123–131; it reads GAHTHQRRS. The chain crosses the membrane as a helical span at residues 132–152; sequence LIVGILCAIFGTIMYSSPLTI. Residues 133 to 216 enclose the MtN3/slv 2 domain; that stretch reads IVGILCAIFG…LILYAIYYRT (84 aa). At 153–165 the chain is on the cytoplasmic side; it reads MSQVVKTKSVEYM. A helical transmembrane segment spans residues 166–186; that stretch reads PLLLSVVSFLNGLCWTSYALI. The Extracellular portion of the chain corresponds to 187–189; the sequence is RLD. Residues 190 to 210 form a helical membrane-spanning segment; the sequence is IFITIPNGLGVLFALMQLILY. Topologically, residues 211–266 are cytoplasmic; sequence AIYYRTTPKKQDKNLELPTVAPVAKDTSIVTPVSKDDDVVDGGNASHVTINITIEP.

Belongs to the SWEET sugar transporter family. Forms homooligomers and/or heterooligomers.

It localises to the cell membrane. Functionally, mediates both low-affinity uptake and efflux of sugar across the plasma membrane. The protein is Bidirectional sugar transporter SWEET7b (SWEET7B) of Oryza sativa subsp. indica (Rice).